A 644-amino-acid chain; its full sequence is Exoribonuclease 2 (644 aa).

Positions 189–516 (REDLTALDFV…NHRLLKAVIK (328 aa)) constitute an RNB domain. Residues 561–643 (DTRFAAEIVD…ETRSIIARPV (83 aa)) enclose the S1 motif domain.

It belongs to the RNR ribonuclease family. RNase II subfamily.

It is found in the cytoplasm. It catalyses the reaction Exonucleolytic cleavage in the 3'- to 5'-direction to yield nucleoside 5'-phosphates.. Functionally, involved in mRNA degradation. Hydrolyzes single-stranded polyribonucleotides processively in the 3' to 5' direction. The sequence is that of Exoribonuclease 2 from Shigella dysenteriae serotype 1 (strain Sd197).